A 300-amino-acid polypeptide reads, in one-letter code: Haloalkane dehalogenase (300 aa).

The AB hydrolase-1 domain occupies Ala-32–Phe-155. Catalysis depends on Asp-109, which acts as the Nucleophile. Glu-133 functions as the Proton donor in the catalytic mechanism. His-273 (proton acceptor) is an active-site residue.

Belongs to the haloalkane dehalogenase family. Type 2 subfamily. In terms of assembly, monomer.

The catalysed reaction is 1-haloalkane + H2O = a halide anion + a primary alcohol + H(+). Functionally, catalyzes hydrolytic cleavage of carbon-halogen bonds in halogenated aliphatic compounds, leading to the formation of the corresponding primary alcohols, halide ions and protons. The sequence is that of Haloalkane dehalogenase from Mycobacterium bovis (strain ATCC BAA-935 / AF2122/97).